The sequence spans 155 residues: FUN14 domain-containing protein 1 (155 aa).

Residues 1–47 (MATRNPPPQDYESDDDSYEVLDLTEYARRHQWWNRVFGHSSGPMVEK) are Cytoplasmic-facing. S13 carries the phosphoserine; by CK2 modification. Position 17 is a phosphoserine; by ULK1 (S17). Y18 is subject to Phosphotyrosine; by SRC. The short motif at 18–21 (YEVL) is the YXXL element. The helical transmembrane segment at 48 to 68 (YSVATQIVMGGVTGWCAGFLF) threads the bilayer. Over 69–74 (QKVGKL) the chain is Mitochondrial intermembrane. Residues 75 to 95 (AATAVGGGFLLLQIASHSGYV) traverse the membrane as a helical segment. Residues 96-133 (QIDWKRVEKDVNKAKRQIKKRANKAAPEINNLIEEATE) lie on the Cytoplasmic side of the membrane. Residue K119 forms a Glycyl lysine isopeptide (Lys-Gly) (interchain with G-Cter in ubiquitin) linkage. The helical transmembrane segment at 134–154 (FIKQNIVISSGFVGGFLLGLA) threads the bilayer. Residue S155 is a topological domain, mitochondrial intermembrane.

Belongs to the FUN14 family. Interacts (via YXXL motif) with MAP1 LC3 family proteins MAP1LC3A, MAP1LC3B and GABARAP. Interacts with DNM1L/DPR1. Interacts with GPX4. Phosphorylation at Ser-13 by CK2 and at Tyr-18 by SRC inhibits activation of mitophagy. Following hypoxia, dephosphorylated at Tyr-18, leading to interaction with MAP1 LC3 family proteins and triggering mitophagy. Dephosphorylation is mediated by PGAM5. Phosphorylated by ULK1 at Ser-17 which enhances FUNDC1 binding to LC3. Post-translationally, ubiquitinated on Lys-119. Deubiquitinated by USP19; leading to hypoxia-induced DRP1 oligomerization and GTPase activity. As to expression, widely expressed.

It is found in the mitochondrion outer membrane. Its function is as follows. Integral mitochondrial outer-membrane protein that mediates the formation of mitochondria-associated endoplasmic reticulum membranes (MAMs). In turn, mediates angiogenesis and neoangiogenesis through interference with intracellular Ca(2+) communication and regulation of the vascular endothelial growth factor receptor KDR/VEGFR2 expression at both mRNA and protein levels. Also acts as an activator of hypoxia-induced mitophagy, an important mechanism for mitochondrial quality and homeostasis, by interacting with and recruiting LC3 protein family to mitochondria. Mechanistically, recruits DRP1 at ER-mitochondria contact sites leading to DRP1 oligomerization and GTPase activity to facilitate mitochondrial fission during hypoxia. Additionally, plays a role in hepatic ferroptosis by interacting directly with glutathione peroxidase/GPX4 to facilitate its recruitment into mitochondria through TOM/TIM complex where it is degraded by mitophagy. The chain is FUN14 domain-containing protein 1 (FUNDC1) from Homo sapiens (Human).